The following is a 152-amino-acid chain: UPF0178 protein NIS_0137 (152 aa).

The protein belongs to the UPF0178 family.

This chain is UPF0178 protein NIS_0137, found in Nitratiruptor sp. (strain SB155-2).